The primary structure comprises 192 residues: NF-kappa-B inhibitor-interacting Ras-like protein 1 (192 aa).

Position 11–18 (11–18 (GLLSVGKT)) interacts with GTP. An Effector region motif is present at residues 35 to 43 (DCETLEDVY). The segment at 58 to 93 (HLYDTRGLQKGVELPKHYFSFADGFVLVYSVNNLES) is interactions with NFKBIA and NFKBIB. Residues 61–65 (DTRGL) and 120–123 (NKLD) contribute to the GTP site. Residues 168–192 (LSQPQSKSSFPLPGRKNKGNSNPEN) form a disordered region.

The protein belongs to the small GTPase superfamily. Ras family. KappaB-Ras subfamily. As to quaternary structure, interacts with both NF-kappa-B inhibitor alpha (NFKBIA) and beta (NFKBIB) in vitro. However, it probably only interacts with NFKBIB in vivo. Forms a complex with NFKBIB and NF-kappa-B heterodimer (p50/NFKB1 and p65/RELA). Also interacts with c-Rel (REL).

Its subcellular location is the cytoplasm. Functionally, atypical Ras-like protein that acts as a potent regulator of NF-kappa-B activity by preventing the degradation of NF-kappa-B inhibitor beta (NFKBIB) by most signals, explaining why NFKBIB is more resistant to degradation. May act by blocking phosphorylation of NFKBIB and mediating cytoplasmic retention of p65/RELA NF-kappa-B subunit. It is unclear whether it acts as a GTPase. Both GTP- and GDP-bound forms block phosphorylation of NFKBIB. This chain is NF-kappa-B inhibitor-interacting Ras-like protein 1 (Nkiras1), found in Mus musculus (Mouse).